The chain runs to 234 residues: Carboxy-S-adenosyl-L-methionine synthase (234 aa).

S-adenosyl-L-methionine is bound by residues Tyr-35, 60-62, 83-84, Asn-124, and Arg-191; these read GSS and DN.

Belongs to the class I-like SAM-binding methyltransferase superfamily. Cx-SAM synthase family. In terms of assembly, homodimer.

It catalyses the reaction prephenate + S-adenosyl-L-methionine = carboxy-S-adenosyl-L-methionine + 3-phenylpyruvate + H2O. Catalyzes the conversion of S-adenosyl-L-methionine (SAM) to carboxy-S-adenosyl-L-methionine (Cx-SAM). This chain is Carboxy-S-adenosyl-L-methionine synthase, found in Nautilia profundicola (strain ATCC BAA-1463 / DSM 18972 / AmH).